Reading from the N-terminus, the 360-residue chain is Peptide chain release factor 1 (360 aa).

An N5-methylglutamine modification is found at Q235.

Belongs to the prokaryotic/mitochondrial release factor family. In terms of processing, methylated by PrmC. Methylation increases the termination efficiency of RF1.

The protein resides in the cytoplasm. Functionally, peptide chain release factor 1 directs the termination of translation in response to the peptide chain termination codons UAG and UAA. This is Peptide chain release factor 1 from Burkholderia cenocepacia (strain ATCC BAA-245 / DSM 16553 / LMG 16656 / NCTC 13227 / J2315 / CF5610) (Burkholderia cepacia (strain J2315)).